The following is an 808-amino-acid chain: Enhancer of polycomb homolog 2 (808 aa).

Residues Lys-135, Lys-195, and Lys-324 each participate in a glycyl lysine isopeptide (Lys-Gly) (interchain with G-Cter in SUMO2) cross-link. The tract at residues 337–357 (YPKKPKAEAGIAPQQPTPETL) is disordered. Residue Lys-362 forms a Glycyl lysine isopeptide (Lys-Gly) (interchain with G-Cter in SUMO2) linkage. Disordered regions lie at residues 371-397 (QSSD…PDGS), 595-630 (QRQQ…CMSK), and 645-682 (VSAP…LYST). Positions 595–614 (QRQQLAQLHQKQQSQHSSQQ) are enriched in low complexity. Composition is skewed to polar residues over residues 615–630 (THPK…CMSK) and 658–682 (EQNT…LYST). Residue Ser-755 is modified to Phosphoserine.

This sequence belongs to the enhancer of polycomb family.

It localises to the nucleus. In terms of biological role, may play a role in transcription or DNA repair. The chain is Enhancer of polycomb homolog 2 (Epc2) from Mus musculus (Mouse).